The following is an 86-amino-acid chain: Elicitor peptide 5 (86 aa).

Positions 1–59 (MQQERDHKRDCCKLMPQTVKAFFKCLRFRRSSSSSSDMVKARARNEEKEEPSSIETSTR) are excised as a propeptide. The tract at residues 31-86 (SSSSSSDMVKARARNEEKEEPSSIETSTRSLNVMRKGIRKQPVSSGKRGGVNDYDM) is disordered. Residues 39 to 51 (VKARARNEEKEEP) show a composition bias toward basic and acidic residues.

It belongs to the brassicaceae elicitor peptide family.

Elicitor of plant defense. The sequence is that of Elicitor peptide 5 (PEP5) from Arabidopsis thaliana (Mouse-ear cress).